The chain runs to 353 residues: MTIALGKFTKDEKDLFDIMDDWLRRDRFVFVGWSGLLLFPCAYFALGGWFTGTTFVTSWYTHGLASSYLEGCNFLTAAVSTPANSLAHSLLLLWGPEAQGDFTRWCQLGGLWTFVALHGAFALIGFMLRQFELARSVQLRPYNAIAFSGPIAVFVSVFLIYPLGQSGWFFAPSFGVAAIFRFILFFQGFHNWTLNPFHMMGVAGVLGAALLCAIHGATVENTLFEDGDGANTFRAFNPTQAEETYSMVTANRFWSQIFGVAFSNKRWLHFFMLFVPVTGLWMSALGVVGLALNLRAYDFVSQEIRAAEDPEFETFYTKNILLNEGIRAWMAAQDQPHENLIFPEEVLPRGNAL.

Threonine 2 carries the N-acetylthreonine modification. Threonine 2 is modified (phosphothreonine). A helical transmembrane segment spans residues cysteine 41–threonine 61. Histidine 118 serves as a coordination point for chlorophyll a. The helical transmembrane segment at glycine 125 to proline 141 threads the bilayer. Pheophytin a-binding residues include glutamine 130 and asparagine 143. The helical transmembrane segment at valine 153–serine 166 threads the bilayer. Residue histidine 198 participates in chlorophyll a binding. A helical membrane pass occupies residues alanine 208–aspartate 228. 2 residues coordinate a plastoquinone: histidine 215 and phenylalanine 262. Position 215 (histidine 215) interacts with Fe cation. Histidine 269 provides a ligand contact to Fe cation. Residues glycine 279–arginine 295 form a helical membrane-spanning segment.

It belongs to the reaction center PufL/M/PsbA/D family. As to quaternary structure, PSII is composed of 1 copy each of membrane proteins PsbA, PsbB, PsbC, PsbD, PsbE, PsbF, PsbH, PsbI, PsbJ, PsbK, PsbL, PsbM, PsbT, PsbX, PsbY, PsbZ, Psb30/Ycf12, at least 3 peripheral proteins of the oxygen-evolving complex and a large number of cofactors. It forms dimeric complexes. The D1/D2 heterodimer binds P680, chlorophylls that are the primary electron donor of PSII, and subsequent electron acceptors. It shares a non-heme iron and each subunit binds pheophytin, quinone, additional chlorophylls, carotenoids and lipids. There is also a Cl(-1) ion associated with D1 and D2, which is required for oxygen evolution. The PSII complex binds additional chlorophylls, carotenoids and specific lipids. is required as a cofactor.

It is found in the plastid. The protein resides in the chloroplast thylakoid membrane. It carries out the reaction 2 a plastoquinone + 4 hnu + 2 H2O = 2 a plastoquinol + O2. Its function is as follows. Photosystem II (PSII) is a light-driven water:plastoquinone oxidoreductase that uses light energy to abstract electrons from H(2)O, generating O(2) and a proton gradient subsequently used for ATP formation. It consists of a core antenna complex that captures photons, and an electron transfer chain that converts photonic excitation into a charge separation. The D1/D2 (PsbA/PsbD) reaction center heterodimer binds P680, the primary electron donor of PSII as well as several subsequent electron acceptors. D2 is needed for assembly of a stable PSII complex. The chain is Photosystem II D2 protein from Olimarabidopsis pumila (Dwarf rocket).